The following is a 390-amino-acid chain: Chalcone synthase (390 aa).

Cys164 is a catalytic residue.

The protein belongs to the thiolase-like superfamily. Chalcone/stilbene synthases family.

It carries out the reaction (E)-4-coumaroyl-CoA + 3 malonyl-CoA + 3 H(+) = 2',4,4',6'-tetrahydroxychalcone + 3 CO2 + 4 CoA. It participates in secondary metabolite biosynthesis; flavonoid biosynthesis. The primary product of this enzyme is 4,2',4',6'-tetrahydroxychalcone (also termed naringenin-chalcone or chalcone) which undergoes enzyme-catalyzed or spontaneous isomerization into naringenin. The sequence is that of Chalcone synthase from Hypericum androsaemum (Tutsan).